A 226-amino-acid chain; its full sequence is Killer cell lectin-like receptor subfamily E member 1 (226 aa).

The tract at residues 1-28 (MDEAPVTRSTLNVNSQQKSKAKNKIKNT) is disordered. Topologically, residues 1–68 (MDEAPVTRST…GKGNCSPPWR (68 aa)) are cytoplasmic. The span at 7 to 18 (TRSTLNVNSQQK) shows a compositional bias: polar residues. The chain crosses the membrane as a helical; Signal-anchor for type II membrane protein span at residues 69–89 (LLSSVLGAMCLLLMAVAMVMT). At 90 to 226 (TFTTKSSSER…ANKLTYICKK (137 aa)) the chain is on the extracellular side. 3 disulfides stabilise this stretch: Cys113-Cys124, Cys141-Cys224, and Cys202-Cys216. A C-type lectin domain is found at 120–225 (FRCSCYFFSK…CANKLTYICK (106 aa)). A glycan (N-linked (GlcNAc...) asparagine) is linked at Asn145.

As to quaternary structure, heterodimer; with KLRI1 or KLRI2. In terms of tissue distribution, expressed in natural killer (NK) cells (at protein level). Also detected in natural killer T (NKT) cells (at protein level). Has little or no expression in T cells (at protein level).

It is found in the cell membrane. Its function is as follows. Lectin-like receptor for natural killer (NK) cells. Can either inhibit or activate NK cell cytotoxic activity, depending on its binding partner. Heterodimer formation with KLRI1 mediates NK cell inhibition whereas heterodimer formation with KLRI2 mediates NK cell activation. Plays a role in allogeneic recognition by the immune system. The chain is Killer cell lectin-like receptor subfamily E member 1 from Mus musculus (Mouse).